The sequence spans 545 residues: MPTNLHAWNALQQHHDAIRDHQMADWFAENGADRVRQFSLEAAGLYLDYSKNRITPQTMQLLLQLADEAGVPARRDAMFAGEHINATEDRAALHVALRATAGAGFKVDGVPVVPAIQNVLVRMRAFSEAVRSGAWTGTTGERITDVVNIGIGGSDLGPKMVCRALSHLAHDDGHSGPRMHFVSNVDGTELAEALERLDPRRTLMIVCSKTFTTLETMANAHSARQWYLDNGVAEDQLARHFVAVSTNVDAVRAFGIDPANMFEFWDWIGGRFSLWSSVGLSTALAVGFNAFADLLAGGRAMDEHFRTAPLERNMPVVLGMLGIWYRNFFNLPTSCMAPYSTSLELFPAFLQQLEMESNGKTVQLNGRRVRTHTSPVVWGTAGTNGQHAYFQMIHQGSQIVPVDFVAPLVPPRELPGHHAKLLANCFAQAEALMRGRSAEELRAAGMTDELRIAHMVFEGNRPSNTLLMEDLTPHVLGALIALYEHRTFVQGVVWNINSFDQWGVELGKILARPIESELNGAQAGSHDASTAALIARARGVLARNG.

The active-site Proton donor is Glu-356. Catalysis depends on residues His-387 and Lys-508.

This sequence belongs to the GPI family.

It localises to the cytoplasm. The catalysed reaction is alpha-D-glucose 6-phosphate = beta-D-fructose 6-phosphate. It participates in carbohydrate biosynthesis; gluconeogenesis. The protein operates within carbohydrate degradation; glycolysis; D-glyceraldehyde 3-phosphate and glycerone phosphate from D-glucose: step 2/4. In terms of biological role, catalyzes the reversible isomerization of glucose-6-phosphate to fructose-6-phosphate. This chain is Glucose-6-phosphate isomerase 1, found in Cupriavidus pinatubonensis (strain JMP 134 / LMG 1197) (Cupriavidus necator (strain JMP 134)).